We begin with the raw amino-acid sequence, 405 residues long: Potassium channel subfamily K member 13 (405 aa).

At 1–19 (MAGRGCSCSPGHLNEDNAR) the chain is on the cytoplasmic side. Residues 20–40 (FLLLAGLILLYLLGGAAVFSA) form a helical membrane-spanning segment. N-linked (GlcNAc...) asparagine glycans are attached at residues asparagine 59 and asparagine 65. An intramembrane region (pore-forming) is located at residues 95–115 (WDFTGAFYFVGTVVTTIGFGM). Positions 110, 111, and 112 each coordinate K(+). The segment at 110–115 (TIGFGM) is selectivity filter 1. Residues 125–145 (VFLIFYGLIGCASTILFFNLF) form a helical membrane-spanning segment. Over 146-193 (LERLITVIAYVMRTCHHQQLRRRGTVARDNRKAPRKGEADSLAGWKPS) the chain is Cytoplasmic. A helical membrane pass occupies residues 194-214 (VYYVMLILCLASVAISCGASA). An intramembrane region (pore-forming) is located at residues 224-244 (YFDSVYFCFVASSTIGFGDLV). Positions 237, 238, 239, and 240 each coordinate K(+). A selectivity filter 2 region spans residues 237-242 (TIGFGD). A helical membrane pass occupies residues 263 to 283 (FFILMGVCCIYSMFNVISILI). Topologically, residues 284–405 (KQTVNWILRK…NRLAETSGDR (122 aa)) are cytoplasmic.

This sequence belongs to the two pore domain potassium channel (TC 1.A.1.8) family. As to quaternary structure, homodimer. Heterodimer with KCNK12. In terms of tissue distribution, ubiquitous. In brain expression is rather low and restricted to the olfactory bulb and tubercle, to the ventromedial hypothalamic nucleus, lateral septal nucleus dorsal, lateral mammillary nucleus, lateral parabrachial nuclei, reticular nucleus and reunions nuclei.

It is found in the cell membrane. The catalysed reaction is K(+)(in) = K(+)(out). Its activity is regulated as follows. The channel currents are activated by arachidonic acid, inhibited by volatile anesthetic halothane, partially inhibited by Ba(2+) ions and only weakly inhibited by extracellular acidification to pH 6. Functionally, k(+) channel that conducts outward rectifying tonic currents potentiated by purinergic signals. Homo- and heterodimerizes to form functional channels with distinct regulatory and gating properties. Contributes most of K(+) currents at the plasma membrane of resting microglia. Maintains a depolarized membrane potential required for proper ramified microglia morphology and phagocytosis, selectively mediating microglial pruning of presynaptic compartments at hippocampal excitatory synapses. Upon local release of ATP caused by neuronal injury or infection, it is potentiated by P2RY12 and P2RX7 receptor signaling and contributes to ATP-triggered K(+) efflux underlying microglial NLRP3 inflammasome assembly and IL1B release. This chain is Potassium channel subfamily K member 13, found in Rattus norvegicus (Rat).